The sequence spans 624 residues: Dihydroxy-acid dehydratase (624 aa).

Residue aspartate 81 coordinates Mg(2+). Cysteine 122 lines the [2Fe-2S] cluster pocket. Residues aspartate 123 and lysine 124 each contribute to the Mg(2+) site. At lysine 124 the chain carries N6-carboxylysine. [2Fe-2S] cluster is bound at residue cysteine 195. Glutamate 499 lines the Mg(2+) pocket. The active-site Proton acceptor is serine 525.

This sequence belongs to the IlvD/Edd family. As to quaternary structure, homodimer. It depends on [2Fe-2S] cluster as a cofactor. Mg(2+) serves as cofactor.

The catalysed reaction is (2R)-2,3-dihydroxy-3-methylbutanoate = 3-methyl-2-oxobutanoate + H2O. It carries out the reaction (2R,3R)-2,3-dihydroxy-3-methylpentanoate = (S)-3-methyl-2-oxopentanoate + H2O. It functions in the pathway amino-acid biosynthesis; L-isoleucine biosynthesis; L-isoleucine from 2-oxobutanoate: step 3/4. Its pathway is amino-acid biosynthesis; L-valine biosynthesis; L-valine from pyruvate: step 3/4. Its function is as follows. Functions in the biosynthesis of branched-chain amino acids. Catalyzes the dehydration of (2R,3R)-2,3-dihydroxy-3-methylpentanoate (2,3-dihydroxy-3-methylvalerate) into 2-oxo-3-methylpentanoate (2-oxo-3-methylvalerate) and of (2R)-2,3-dihydroxy-3-methylbutanoate (2,3-dihydroxyisovalerate) into 2-oxo-3-methylbutanoate (2-oxoisovalerate), the penultimate precursor to L-isoleucine and L-valine, respectively. In Shewanella baltica (strain OS155 / ATCC BAA-1091), this protein is Dihydroxy-acid dehydratase.